The following is a 264-amino-acid chain: 3-methyl-2-oxobutanoate hydroxymethyltransferase 1 (264 aa).

Mg(2+) contacts are provided by Asp45 and Asp84. 3-methyl-2-oxobutanoate-binding positions include 45-46 (DS), Asp84, and Lys112. Residue Glu114 coordinates Mg(2+). Glu181 acts as the Proton acceptor in catalysis.

This sequence belongs to the PanB family. Homodecamer; pentamer of dimers. Requires Mg(2+) as cofactor.

It is found in the cytoplasm. The enzyme catalyses 3-methyl-2-oxobutanoate + (6R)-5,10-methylene-5,6,7,8-tetrahydrofolate + H2O = 2-dehydropantoate + (6S)-5,6,7,8-tetrahydrofolate. It functions in the pathway cofactor biosynthesis; (R)-pantothenate biosynthesis; (R)-pantoate from 3-methyl-2-oxobutanoate: step 1/2. Its function is as follows. Catalyzes the reversible reaction in which hydroxymethyl group from 5,10-methylenetetrahydrofolate is transferred onto alpha-ketoisovalerate to form ketopantoate. This Aliivibrio fischeri (strain ATCC 700601 / ES114) (Vibrio fischeri) protein is 3-methyl-2-oxobutanoate hydroxymethyltransferase 1.